Consider the following 335-residue polypeptide: Beta-ketoacyl-[acyl-carrier-protein] synthase III (335 aa).

Residues Cys119 and His261 contribute to the active site. The segment at 262–266 (QANQR) is ACP-binding. Asn291 is a catalytic residue.

This sequence belongs to the thiolase-like superfamily. FabH family. Homodimer.

It is found in the cytoplasm. It catalyses the reaction malonyl-[ACP] + acetyl-CoA + H(+) = 3-oxobutanoyl-[ACP] + CO2 + CoA. It functions in the pathway lipid metabolism; fatty acid biosynthesis. Catalyzes the condensation reaction of fatty acid synthesis by the addition to an acyl acceptor of two carbons from malonyl-ACP. Catalyzes the first condensation reaction which initiates fatty acid synthesis and may therefore play a role in governing the total rate of fatty acid production. Possesses both acetoacetyl-ACP synthase and acetyl transacylase activities. Its substrate specificity determines the biosynthesis of branched-chain and/or straight-chain of fatty acids. This chain is Beta-ketoacyl-[acyl-carrier-protein] synthase III, found in Prochlorococcus marinus (strain MIT 9312).